The following is a 216-amino-acid chain: NKG2-D type II integral membrane protein (216 aa).

The Cytoplasmic segment spans residues 1–51; it reads MGWIRGRRPRHNLEMSEFHNYKLGLAKSDFSTRCQKQRCPVIKSKCRENAS. The helical; Signal-anchor for type II membrane protein transmembrane segment at 52-72 threads the bilayer; sequence PLFFCCFIAVAMGIRFIIMVT. At 73–216 the chain is on the extracellular side; the sequence is IWSAVFLNSL…NTYICMQRTV (144 aa). 2 disulfides stabilise this stretch: cysteine 96/cysteine 105 and cysteine 99/cysteine 110. The C-type lectin domain occupies 98-213; the sequence is PCPKNWICYK…SIPNTYICMQ (116 aa). N-linked (GlcNAc...) asparagine glycans are attached at residues asparagine 115, asparagine 131, asparagine 163, and asparagine 202. Intrachain disulfides connect cysteine 127-cysteine 211 and cysteine 189-cysteine 203.

As to quaternary structure, homodimer; disulfide-linked. Heterohexamer composed of two subunits of KLRK1 and four subunits of HCST/DAP10. Interacts (via transmembrane domain) with HCST/DAP10 (via transmembrane domain); the interaction is required for KLRK1 NK cell surface and induces NK cell-mediated cytotoxicity. Can form disulfide-bonded heterodimer with CD94. Interacts with CEACAM1; recruits PTPN6 that dephosphorylates VAV1. In terms of tissue distribution, natural killer cells.

It is found in the cell membrane. Its function is as follows. Functions as an activating and costimulatory receptor involved in immunosurveillance upon binding to various cellular stress-inducible ligands displayed at the surface of autologous tumor cells and virus-infected cells. Provides both stimulatory and costimulatory innate immune responses on activated killer (NK) cells, leading to cytotoxic activity. Acts as a costimulatory receptor for T-cell receptor (TCR) in CD8(+) T-cell-mediated adaptive immune responses by amplifying T-cell activation. Stimulates perforin-mediated elimination of ligand-expressing tumor cells. Signaling involves calcium influx, culminating in the expression of TNF-alpha. Participates in NK cell-mediated bone marrow graft rejection. May play a regulatory role in differentiation and survival of NK cells. Binds to ligands belonging to various subfamilies of MHC class I-related glycoproteins. This is NKG2-D type II integral membrane protein (KLRK1) from Macaca fascicularis (Crab-eating macaque).